We begin with the raw amino-acid sequence, 120 residues long: UPF0231 protein YacL (120 aa).

It belongs to the UPF0231 family.

In Escherichia coli O139:H28 (strain E24377A / ETEC), this protein is UPF0231 protein YacL.